We begin with the raw amino-acid sequence, 355 residues long: Capsular polysaccharide biosynthesis glycosyltransferase CapH (355 aa).

This sequence belongs to the glycosyltransferase group 1 family. Glycosyltransferase 4 subfamily.

It participates in capsule biogenesis; capsule polysaccharide biosynthesis. Required for the biosynthesis of type 1 capsular polysaccharide. In Staphylococcus aureus, this protein is Capsular polysaccharide biosynthesis glycosyltransferase CapH (capH).